The chain runs to 351 residues: Thiamine-phosphate synthase (351 aa).

Positions 1–127 (MQNLAPASEG…SETAKALRYR (127 aa)) are unknown. The disordered stretch occupies residues 64–84 (RAARQTDQDPGTALSHPQERD). The tract at residues 128 to 351 (VYILEQALTL…LRRLSQGEPS (224 aa)) is thiamine-phosphate synthase. 4-amino-2-methyl-5-(diphosphooxymethyl)pyrimidine-binding positions include 178–182 (QYRDK) and Asn-210. Mg(2+) contacts are provided by Asp-211 and Asp-230. Ser-249 serves as a coordination point for 4-amino-2-methyl-5-(diphosphooxymethyl)pyrimidine. 275-277 (TPT) is a binding site for 2-[(2R,5Z)-2-carboxy-4-methylthiazol-5(2H)-ylidene]ethyl phosphate. Lys-278 contacts 4-amino-2-methyl-5-(diphosphooxymethyl)pyrimidine. Gly-305 is a binding site for 2-[(2R,5Z)-2-carboxy-4-methylthiazol-5(2H)-ylidene]ethyl phosphate.

The protein belongs to the thiamine-phosphate synthase family. The cofactor is Mg(2+).

It carries out the reaction 2-[(2R,5Z)-2-carboxy-4-methylthiazol-5(2H)-ylidene]ethyl phosphate + 4-amino-2-methyl-5-(diphosphooxymethyl)pyrimidine + 2 H(+) = thiamine phosphate + CO2 + diphosphate. The enzyme catalyses 2-(2-carboxy-4-methylthiazol-5-yl)ethyl phosphate + 4-amino-2-methyl-5-(diphosphooxymethyl)pyrimidine + 2 H(+) = thiamine phosphate + CO2 + diphosphate. The catalysed reaction is 4-methyl-5-(2-phosphooxyethyl)-thiazole + 4-amino-2-methyl-5-(diphosphooxymethyl)pyrimidine + H(+) = thiamine phosphate + diphosphate. It functions in the pathway cofactor biosynthesis; thiamine diphosphate biosynthesis; thiamine phosphate from 4-amino-2-methyl-5-diphosphomethylpyrimidine and 4-methyl-5-(2-phosphoethyl)-thiazole: step 1/1. Functionally, condenses 4-methyl-5-(beta-hydroxyethyl)thiazole monophosphate (THZ-P) and 2-methyl-4-amino-5-hydroxymethyl pyrimidine pyrophosphate (HMP-PP) to form thiamine monophosphate (TMP). The sequence is that of Thiamine-phosphate synthase from Thermosynechococcus vestitus (strain NIES-2133 / IAM M-273 / BP-1).